Reading from the N-terminus, the 377-residue chain is tRNA-specific 2-thiouridylase MnmA (377 aa).

Residues 16–23 (GMSGGVDS) and methionine 42 contribute to the ATP site. Positions 102-104 (NPD) are interaction with target base in tRNA. Catalysis depends on cysteine 107, which acts as the Nucleophile. The cysteines at positions 107 and 204 are disulfide-linked. Residue glycine 131 coordinates ATP. The interaction with tRNA stretch occupies residues 154-156 (KDQ). The Cysteine persulfide intermediate role is filled by cysteine 204. The segment at 315–316 (RY) is interaction with tRNA.

Belongs to the MnmA/TRMU family.

It localises to the cytoplasm. It carries out the reaction S-sulfanyl-L-cysteinyl-[protein] + uridine(34) in tRNA + AH2 + ATP = 2-thiouridine(34) in tRNA + L-cysteinyl-[protein] + A + AMP + diphosphate + H(+). In terms of biological role, catalyzes the 2-thiolation of uridine at the wobble position (U34) of tRNA, leading to the formation of s(2)U34. This chain is tRNA-specific 2-thiouridylase MnmA, found in Lacticaseibacillus paracasei (strain ATCC 334 / BCRC 17002 / CCUG 31169 / CIP 107868 / KCTC 3260 / NRRL B-441) (Lactobacillus paracasei).